A 771-amino-acid chain; its full sequence is Metal transporter CNNM4 (771 aa).

Residues 1–175 (MAPGGGGGRR…LLFMVEEHGR (175 aa)) lie on the Extracellular side of the membrane. Residue Asn119 is glycosylated (N-linked (GlcNAc...) asparagine). Positions 175-355 (RFLPLWLHIL…EPYNDLVKEE (181 aa)) constitute a CNNM transmembrane domain. The helical transmembrane segment at 176-196 (FLPLWLHILLVMVLLVLSGIF) threads the bilayer. Residues 197–237 (SGLNLGLMALDPMELRIVQNCGTEKERKYARKIEPIRRKGN) are Cytoplasmic-facing. Positions 238-258 (YLLCSLLLGNVLVNTSLTILL) form an intramembrane region, helical. Residues 259–261 (DNL) are Cytoplasmic-facing. A helical transmembrane segment spans residues 262-282 (IGSGIMAVASSTIGIVIFGEI). Residues 283 to 290 (LPQALCSR) lie on the Extracellular side of the membrane. A helical transmembrane segment spans residues 291–313 (HGLAVGANTIVLTKVFMLLTFPL). Residues 314 to 771 (SFPISKLLDF…LHRASEEETI (458 aa)) lie on the Cytoplasmic side of the membrane. CBS domains follow at residues 374–435 (MTQL…CTPL) and 442–508 (YNHP…ILDE). 3 positions are modified to phosphoserine: Ser657, Ser661, and Ser766.

Belongs to the ACDP family. Interacts with COX11. Cornea, retina, teeth (at protein level). In the retina it is predominantly localized to the outer plexiform layer, inner plexiform layer and ganglion cell layer. In the tooth strongest expression is observed in the cell body of the ameloblasts. Expressed at high levels in the gastrointestinal tract and testis.

It is found in the cell membrane. Its function is as follows. Probable metal transporter. The interaction with the metal ion chaperone COX11 suggests that it may play a role in sensory neuron functions. May play a role in biomineralization and retinal function. This is Metal transporter CNNM4 (Cnnm4) from Mus musculus (Mouse).